The chain runs to 225 residues: Biosynthetic peptidoglycan transglycosylase (225 aa).

The helical transmembrane segment at 7–27 (SFLFKMVLILLIAPIVLVGVV) threads the bilayer.

Belongs to the glycosyltransferase 51 family.

The protein localises to the cell inner membrane. The catalysed reaction is [GlcNAc-(1-&gt;4)-Mur2Ac(oyl-L-Ala-gamma-D-Glu-L-Lys-D-Ala-D-Ala)](n)-di-trans,octa-cis-undecaprenyl diphosphate + beta-D-GlcNAc-(1-&gt;4)-Mur2Ac(oyl-L-Ala-gamma-D-Glu-L-Lys-D-Ala-D-Ala)-di-trans,octa-cis-undecaprenyl diphosphate = [GlcNAc-(1-&gt;4)-Mur2Ac(oyl-L-Ala-gamma-D-Glu-L-Lys-D-Ala-D-Ala)](n+1)-di-trans,octa-cis-undecaprenyl diphosphate + di-trans,octa-cis-undecaprenyl diphosphate + H(+). Its pathway is cell wall biogenesis; peptidoglycan biosynthesis. Functionally, peptidoglycan polymerase that catalyzes glycan chain elongation from lipid-linked precursors. The chain is Biosynthetic peptidoglycan transglycosylase from Vibrio parahaemolyticus serotype O3:K6 (strain RIMD 2210633).